The primary structure comprises 228 residues: MKLIELCVLCAIAFAAPRQKRLTVGTIAVTGGVGGASGCVVTGNVLYANGFRLRELSASEQQELTNYEKQVAEYKASVKQILKERQEKLKSRMSGKKEEKAAVTSTKDEDLPKPPQKPSFCTEDDTTQFYFDGCMVQGNKVYVGNTFARDLDQNEIEELKEFEKKQTVYQEYVQKQIQQQVSNLFGGADFFSSFFGDAKDQTTTTVAPVLPEDAPEQPAVPNFCTRIY.

Positions 1–15 are cleaved as a signal peptide; it reads MKLIELCVLCAIAFA. The segment covering 88–112 has biased composition (basic and acidic residues); that stretch reads KLKSRMSGKKEEKAAVTSTKDEDLP. The disordered stretch occupies residues 88-119; sequence KLKSRMSGKKEEKAAVTSTKDEDLPKPPQKPS. A disulfide bridge connects residues C134 and C224.

The protein belongs to the protease inhibitor I33 family.

It is found in the secreted. Functionally, aspartyl protease inhibitor. The sequence is that of Aspartyl protease inhibitor from Trichostrongylus colubriformis (Black scour worm).